The primary structure comprises 344 residues: Angiopoietin-related protein 7 (344 aa).

Positions 1 to 26 are cleaved as a signal peptide; that stretch reads MLKKTLSAVAWLCIFLVAFVSHPVWP. Positions 37–116 form a coiled coil; sequence ELTAATCCEE…IGIMQLQAAQ (80 aa). An N-linked (GlcNAc...) asparagine glycan is attached at N56. Positions 120–341 constitute a Fibrinogen C-terminal domain; that stretch reads QTSADAIYDC…RVEMKIRPED (222 aa). Cysteines 129 and 160 form a disulfide. 2 N-linked (GlcNAc...) asparagine glycosylation sites follow: N251 and N265. C283 and C296 are oxidised to a cystine.

Homotetramer; disulfide-linked.

The protein resides in the secreted. In terms of biological role, has a role in the formation and organization of the extracellular matrix. In the eye, it functions as a mediator of dexamethasone-induced matrix deposition in the trabecular meshwork, the tissue responsible for the outflow of the ocular aqueous humor and for the maintenance of intraocular pressure. Is a negative regulator of angiogenesis in the cornea, and plays a major role in maintaining corneal avascularity and transparency. The chain is Angiopoietin-related protein 7 (ANGPTL7) from Bos taurus (Bovine).